The primary structure comprises 301 residues: Ornithine carbamoyltransferase (301 aa).

Residues R100 and 127–130 each bind carbamoyl phosphate; that span reads HPCQ. Residues N158, D221, and 225–226 contribute to the L-ornithine site; that span reads SM. Residues 260–261 and R288 each bind carbamoyl phosphate; that span reads CL.

It belongs to the aspartate/ornithine carbamoyltransferase superfamily. OTCase family.

The protein localises to the cytoplasm. It carries out the reaction carbamoyl phosphate + L-ornithine = L-citrulline + phosphate + H(+). It functions in the pathway amino-acid biosynthesis; L-arginine biosynthesis; L-arginine from L-ornithine and carbamoyl phosphate: step 1/3. Functionally, reversibly catalyzes the transfer of the carbamoyl group from carbamoyl phosphate (CP) to the N(epsilon) atom of ornithine (ORN) to produce L-citrulline. In Shewanella oneidensis (strain ATCC 700550 / JCM 31522 / CIP 106686 / LMG 19005 / NCIMB 14063 / MR-1), this protein is Ornithine carbamoyltransferase.